The primary structure comprises 132 residues: uncharacterized protein (132 aa).

Residues 66-86 (LPPMLLVLAALFVKGLIPLVL) form a helical membrane-spanning segment.

It localises to the membrane. This is an uncharacterized protein from Saccharomyces cerevisiae (strain ATCC 204508 / S288c) (Baker's yeast).